Consider the following 370-residue polypeptide: Chaperone protein DnaJ (370 aa).

The 65-residue stretch at 5-69 (DYYEVLGVDR…QKKAHYDQFG (65 aa)) folds into the J domain. The CR-type zinc-finger motif lies at 128–210 (GKETTIEIPR…CGGKGKVRKR (83 aa)). Zn(2+) contacts are provided by cysteine 141, cysteine 144, cysteine 158, cysteine 161, cysteine 184, cysteine 187, cysteine 198, and cysteine 201. 4 CXXCXGXG motif repeats span residues 141 to 148 (CHTCSGSG), 158 to 165 (CPHCGGSG), 184 to 191 (CHHCEGTG), and 198 to 205 (CATCGGKG).

Belongs to the DnaJ family. In terms of assembly, homodimer. Zn(2+) serves as cofactor.

It localises to the cytoplasm. Its function is as follows. Participates actively in the response to hyperosmotic and heat shock by preventing the aggregation of stress-denatured proteins and by disaggregating proteins, also in an autonomous, DnaK-independent fashion. Unfolded proteins bind initially to DnaJ; upon interaction with the DnaJ-bound protein, DnaK hydrolyzes its bound ATP, resulting in the formation of a stable complex. GrpE releases ADP from DnaK; ATP binding to DnaK triggers the release of the substrate protein, thus completing the reaction cycle. Several rounds of ATP-dependent interactions between DnaJ, DnaK and GrpE are required for fully efficient folding. Also involved, together with DnaK and GrpE, in the DNA replication of plasmids through activation of initiation proteins. In Halalkalibacterium halodurans (strain ATCC BAA-125 / DSM 18197 / FERM 7344 / JCM 9153 / C-125) (Bacillus halodurans), this protein is Chaperone protein DnaJ.